The chain runs to 424 residues: Histidine--tRNA ligase (424 aa).

The protein belongs to the class-II aminoacyl-tRNA synthetase family. Homodimer.

The protein localises to the cytoplasm. The catalysed reaction is tRNA(His) + L-histidine + ATP = L-histidyl-tRNA(His) + AMP + diphosphate + H(+). The chain is Histidine--tRNA ligase from Salmonella agona (strain SL483).